Here is a 48-residue protein sequence, read N- to C-terminus: Photosystem II reaction center protein K (48 aa).

A propeptide spanning residues 1 to 11 (MFPSTNQEVLA) is cleaved from the precursor. The helical transmembrane segment at 23–43 (IVDVLPIIPLLFLLLAFVWQA) threads the bilayer.

The protein belongs to the PsbK family. PSII is composed of 1 copy each of membrane proteins PsbA, PsbB, PsbC, PsbD, PsbE, PsbF, PsbH, PsbI, PsbJ, PsbK, PsbL, PsbM, PsbT, PsbY, PsbZ, Psb30/Ycf12, at least 3 peripheral proteins of the oxygen-evolving complex and a large number of cofactors. It forms dimeric complexes.

It is found in the plastid. Its subcellular location is the chloroplast thylakoid membrane. One of the components of the core complex of photosystem II (PSII). PSII is a light-driven water:plastoquinone oxidoreductase that uses light energy to abstract electrons from H(2)O, generating O(2) and a proton gradient subsequently used for ATP formation. It consists of a core antenna complex that captures photons, and an electron transfer chain that converts photonic excitation into a charge separation. The protein is Photosystem II reaction center protein K of Euglena sanguinea.